The sequence spans 929 residues: Dual serine/threonine and tyrosine protein kinase (929 aa).

The segment covering 1–14 has biased composition (low complexity); it reads MEGDGVPWGSEPVS. The segment at 1–21 is disordered; that stretch reads MEGDGVPWGSEPVSGPGPGGG. 2 coiled-coil regions span residues 189-215 and 395-431; these read EEDLEVQENNEDAAHVLAELEVTMHHA and RKKENELYESLMNIANRKQEEMKDMIVETLNTMKEEL. The Protein kinase domain occupies 652–906; that stretch reads PKLGQELGRG…PLLGIVQPML (255 aa). Residues 658 to 666 and Lys-681 each bind ATP; that span reads LGRGQYGVV. The Proton acceptor role is filled by Asp-777.

This sequence belongs to the protein kinase superfamily. Ser/Thr protein kinase family. Predominantly expressed in skeletal muscle and testis. Expressed in basolateral and apical membranes of all tubular epithelia. Expressed in thin ascending limb of the loop of Henle and the distal convoluted tubule. Expressed in all layers of transitional ureteric epithelium and in the ureteric smooth-muscle cells. Weakly expressed in heart, brain, placenta, kidney, pancreas, spleen, thymus, prostate, uterus, small intestine, white blood cells, stomach, spinal cord and adrenal gland. Is widely distributed in the CNS. Also detected in several tumor cell lines. Expressed in the skin.

It localises to the cytoplasm. Its subcellular location is the cell membrane. The protein localises to the apical cell membrane. It is found in the basolateral cell membrane. The protein resides in the cell junction. The catalysed reaction is L-seryl-[protein] + ATP = O-phospho-L-seryl-[protein] + ADP + H(+). The enzyme catalyses L-threonyl-[protein] + ATP = O-phospho-L-threonyl-[protein] + ADP + H(+). It catalyses the reaction L-tyrosyl-[protein] + ATP = O-phospho-L-tyrosyl-[protein] + ADP + H(+). Acts as a positive regulator of ERK phosphorylation downstream of fibroblast growth factor-receptor activation. Involved in the regulation of both caspase-dependent apoptosis and caspase-independent cell death. In the skin, it plays a predominant role in suppressing caspase-dependent apoptosis in response to UV stress in a range of dermal cell types. In Homo sapiens (Human), this protein is Dual serine/threonine and tyrosine protein kinase (DSTYK).